A 331-amino-acid chain; its full sequence is 6-phosphogluconolactonase (331 aa).

The residue at position 287 (lysine 287) is an N6-acetyllysine.

This sequence belongs to the cycloisomerase 2 family.

The catalysed reaction is 6-phospho-D-glucono-1,5-lactone + H2O = 6-phospho-D-gluconate + H(+). It functions in the pathway carbohydrate degradation; pentose phosphate pathway; D-ribulose 5-phosphate from D-glucose 6-phosphate (oxidative stage): step 2/3. Functionally, catalyzes the hydrolysis of 6-phosphogluconolactone to 6-phosphogluconate. The protein is 6-phosphogluconolactonase of Escherichia coli O6:K15:H31 (strain 536 / UPEC).